A 400-amino-acid polypeptide reads, in one-letter code: uncharacterized protein (400 aa).

Belongs to the mimivirus R640 family.

Its subcellular location is the virion. This is an uncharacterized protein from Acanthamoeba polyphaga (Amoeba).